Reading from the N-terminus, the 142-residue chain is MRRWEHYEHTADIGVRGYGSTLEEAFEAVALGLFDVMVDVRKVEPRECREVEVEEEDLEALLYSFLEELLVLHDMEGLVFGDVRVRIEKTENGYRLKAKACGEVLDYEKHEPKEEVKAITYHDMRIEKLPDGRWMAQFVPDL.

Ca(2+)-binding residues include D12, D141, and L142.

The protein belongs to the archease family.

Its function is as follows. Activates the tRNA-splicing ligase complex by facilitating the enzymatic turnover of catalytic subunit RtcB. Acts by promoting the guanylylation of RtcB, a key intermediate step in tRNA ligation. Can also alter the NTP specificity of RtcB such that ATP, dGTP or ITP is used efficiently. The sequence is that of Protein archease from Thermococcus gammatolerans (strain DSM 15229 / JCM 11827 / EJ3).